Consider the following 545-residue polypeptide: ATP synthase subunit alpha (545 aa).

Position 173-180 (173-180 (GDRQTGKT)) interacts with ATP.

This sequence belongs to the ATPase alpha/beta chains family. F-type ATPases have 2 components, CF(1) - the catalytic core - and CF(0) - the membrane proton channel. CF(1) has five subunits: alpha(3), beta(3), gamma(1), delta(1), epsilon(1). CF(0) has three main subunits: a(1), b(2) and c(9-12). The alpha and beta chains form an alternating ring which encloses part of the gamma chain. CF(1) is attached to CF(0) by a central stalk formed by the gamma and epsilon chains, while a peripheral stalk is formed by the delta and b chains.

It localises to the cell membrane. The catalysed reaction is ATP + H2O + 4 H(+)(in) = ADP + phosphate + 5 H(+)(out). Functionally, produces ATP from ADP in the presence of a proton gradient across the membrane. The alpha chain is a regulatory subunit. The polypeptide is ATP synthase subunit alpha (Paenarthrobacter aurescens (strain TC1)).